The sequence spans 205 residues: Large ribosomal subunit protein uL3 (205 aa).

Residues Gly-126 to Gly-150 form a disordered region.

This sequence belongs to the universal ribosomal protein uL3 family. Part of the 50S ribosomal subunit. Forms a cluster with proteins L14 and L19.

Functionally, one of the primary rRNA binding proteins, it binds directly near the 3'-end of the 23S rRNA, where it nucleates assembly of the 50S subunit. The chain is Large ribosomal subunit protein uL3 from Dehalococcoides mccartyi (strain ATCC BAA-2266 / KCTC 15142 / 195) (Dehalococcoides ethenogenes (strain 195)).